Reading from the N-terminus, the 463-residue chain is Mitochondrial dynamics protein MID51 (463 aa).

The Mitochondrial intermembrane segment spans residues 1-23 (MAGAGERKGKKDDNGIGTAIDFV). The chain crosses the membrane as a helical span at residues 24-46 (LSNARLVLGVGGAAMLGIATLAV). At 47–463 (KRMYDRAISA…LSEPEVLLQT (417 aa)) the chain is on the cytoplasmic side. The tract at residues 49-195 (MYDRAISAPT…LSGSLYDDLQ (147 aa)) is dimerization. 4 positions are modified to phosphoserine: serine 55, serine 59, serine 79, and serine 94. Positions 57 to 79 (PTSPTRLSHSGKRSWEEPNWMGS) are disordered. Residues 104–123 (AFDTDTFCPPRPKPVARKGQ) are disordered. The important for interaction with DNM1L stretch occupies residues 160 to 169 (AAVDICAELR). The ADP site is built by serine 187, serine 189, and histidine 201. The tract at residues 234 to 243 (RRENPEYFPR) is important for interaction with DNM1L. Residues serine 340, arginine 342, and lysine 368 each coordinate ADP.

It belongs to the MID49/MID51 family. In terms of assembly, homodimer. Interacts with DNM1L.

It is found in the mitochondrion outer membrane. Mitochondrial outer membrane protein which regulates mitochondrial fission/fusion dynamics. Promotes the recruitment and association of the fission mediator dynamin-related protein 1 (DNM1L) to the mitochondrial surface independently of the mitochondrial fission FIS1 and MFF proteins. Regulates DNM1L GTPase activity and DNM1L oligomerization. Binds ADP and can also bind GDP, although with lower affinity. Does not bind CDP, UDP, ATP, AMP or GTP. Inhibits DNM1L GTPase activity in the absence of bound ADP. Requires ADP to stimulate DNM1L GTPase activity and the assembly of DNM1L into long, oligomeric tubules with a spiral pattern, as opposed to the ring-like DNM1L oligomers observed in the absence of bound ADP. Does not require ADP for its function in recruiting DNM1L. In Pongo abelii (Sumatran orangutan), this protein is Mitochondrial dynamics protein MID51 (MIEF1).